A 197-amino-acid chain; its full sequence is Signal peptidase complex catalytic subunit SEC11 (197 aa).

The Cytoplasmic segment spans residues 1-14 (MLSSLAPYMANPRQ). A helical; Signal-anchor for type II membrane protein membrane pass occupies residues 15-33 (TLTQVLNFALVLSTAFMLW). Topologically, residues 34–197 (KGLSVVTNST…MGLMVVLQRE (164 aa)) are lumenal. N41 carries an N-linked (GlcNAc...) asparagine glycan. Active-site charge relay system residues include S53 and H92. Residues 102 to 115 (PGREDKKSVKKGGE) show a composition bias toward basic and acidic residues. The segment at 102-134 (PGREDKKSVKKGGEEGEETSSTPSQKLLTKGDN) is disordered. D139 functions as the Charge relay system in the catalytic mechanism. Positions 183 to 194 (VLLGFMGLMVVL) are C-terminal short (CTS) helix.

The protein belongs to the peptidase S26B family. As to quaternary structure, component of the signal peptidase complex (SPC) composed of a catalytic subunit SEC11 and three accessory subunits SPC1, SPC2 and SPC3. The complex induces a local thinning of the ER membrane which is used to measure the length of the signal peptide (SP) h-region of protein substrates. This ensures the selectivity of the complex towards h-regions shorter than 18-20 amino acids. SPC associates with the translocon complex.

It is found in the endoplasmic reticulum membrane. It carries out the reaction Cleavage of hydrophobic, N-terminal signal or leader sequences from secreted and periplasmic proteins.. In terms of biological role, catalytic component of the signal peptidase complex (SPC) which catalyzes the cleavage of N-terminal signal sequences from nascent proteins as they are translocated into the lumen of the endoplasmic reticulum. Specifically cleaves N-terminal signal peptides that contain a hydrophobic alpha-helix (h-region) shorter than 18-20 amino acids. The protein is Signal peptidase complex catalytic subunit SEC11 (SEC11) of Paracoccidioides lutzii (strain ATCC MYA-826 / Pb01) (Paracoccidioides brasiliensis).